The sequence spans 201 residues: MESEKSKFDYYIVTPDSLFERVDGIPMTKEEIRLISLNRLGVRNGGHFLDIGTGTGSVAVDMSRLAGPNGKIIALDRDEKAIKLARINLDRLSPYKNIQLVLADAYAYSPADSFDAIFIGGGTGDLPNLVSKYVPFLKSGARVVINAIQVKTLNDAVESLELNNFRNVSVIEVQISVGMKTGSSYAMIARNPIFVVSGEQP.

S-adenosyl-L-methionine-binding positions include Thr28, 52 to 56 (GTGTG), Asp76, and Ala105.

The protein belongs to the methyltransferase superfamily. Archaeal-type CbiT family.

The catalysed reaction is Co-precorrin-6B + S-adenosyl-L-methionine = Co-precorrin-7 + S-adenosyl-L-homocysteine + CO2. It participates in cofactor biosynthesis; adenosylcobalamin biosynthesis; cob(II)yrinate a,c-diamide from sirohydrochlorin (anaerobic route): step 8/10. Its function is as follows. Catalyzes the methylation of C-15 in cobalt-precorrin-6B followed by the decarboxylation of C-12 to form cobalt-precorrin-7. In Thermoplasma volcanium (strain ATCC 51530 / DSM 4299 / JCM 9571 / NBRC 15438 / GSS1), this protein is Probable cobalt-precorrin-6B C(15)-methyltransferase (decarboxylating).